A 245-amino-acid polypeptide reads, in one-letter code: Small ribosomal subunit protein uS2 (245 aa).

Belongs to the universal ribosomal protein uS2 family.

The sequence is that of Small ribosomal subunit protein uS2 from Pseudomonas entomophila (strain L48).